We begin with the raw amino-acid sequence, 123 residues long: Small ribosomal subunit protein uS12 (123 aa).

Aspartate 89 carries the 3-methylthioaspartic acid modification.

This sequence belongs to the universal ribosomal protein uS12 family. Part of the 30S ribosomal subunit. Contacts proteins S8 and S17. May interact with IF1 in the 30S initiation complex.

With S4 and S5 plays an important role in translational accuracy. Functionally, interacts with and stabilizes bases of the 16S rRNA that are involved in tRNA selection in the A site and with the mRNA backbone. Located at the interface of the 30S and 50S subunits, it traverses the body of the 30S subunit contacting proteins on the other side and probably holding the rRNA structure together. The combined cluster of proteins S8, S12 and S17 appears to hold together the shoulder and platform of the 30S subunit. The protein is Small ribosomal subunit protein uS12 of Geobacter metallireducens (strain ATCC 53774 / DSM 7210 / GS-15).